Reading from the N-terminus, the 187-residue chain is UPF0215 protein PAE0952 (187 aa).

This sequence belongs to the UPF0215 family.

The protein is UPF0215 protein PAE0952 of Pyrobaculum aerophilum (strain ATCC 51768 / DSM 7523 / JCM 9630 / CIP 104966 / NBRC 100827 / IM2).